The chain runs to 351 residues: DNA polymerase IV (351 aa).

Residues 4–184 (FIHIDMDCFY…LPLGKIPGVG (181 aa)) enclose the UmuC domain. Asp8 and Asp102 together coordinate Mg(2+). Residue Glu103 is part of the active site.

Belongs to the DNA polymerase type-Y family. As to quaternary structure, monomer. It depends on Mg(2+) as a cofactor.

Its subcellular location is the cytoplasm. It catalyses the reaction DNA(n) + a 2'-deoxyribonucleoside 5'-triphosphate = DNA(n+1) + diphosphate. Functionally, poorly processive, error-prone DNA polymerase involved in untargeted mutagenesis. Copies undamaged DNA at stalled replication forks, which arise in vivo from mismatched or misaligned primer ends. These misaligned primers can be extended by PolIV. Exhibits no 3'-5' exonuclease (proofreading) activity. May be involved in translesional synthesis, in conjunction with the beta clamp from PolIII. The sequence is that of DNA polymerase IV from Pseudoalteromonas translucida (strain TAC 125).